The sequence spans 422 residues: Serine--tRNA ligase (422 aa).

Position 230–232 (230–232 (TAE)) interacts with L-serine. 261–263 (RNE) is a binding site for ATP. Glu-284 serves as a coordination point for L-serine. Position 347-350 (347-350 (EVSS)) interacts with ATP. Ser-383 contacts L-serine.

This sequence belongs to the class-II aminoacyl-tRNA synthetase family. Type-1 seryl-tRNA synthetase subfamily. As to quaternary structure, homodimer. The tRNA molecule binds across the dimer.

It is found in the cytoplasm. The enzyme catalyses tRNA(Ser) + L-serine + ATP = L-seryl-tRNA(Ser) + AMP + diphosphate + H(+). It carries out the reaction tRNA(Sec) + L-serine + ATP = L-seryl-tRNA(Sec) + AMP + diphosphate + H(+). It functions in the pathway aminoacyl-tRNA biosynthesis; selenocysteinyl-tRNA(Sec) biosynthesis; L-seryl-tRNA(Sec) from L-serine and tRNA(Sec): step 1/1. Catalyzes the attachment of serine to tRNA(Ser). Is also able to aminoacylate tRNA(Sec) with serine, to form the misacylated tRNA L-seryl-tRNA(Sec), which will be further converted into selenocysteinyl-tRNA(Sec). This chain is Serine--tRNA ligase, found in Herpetosiphon aurantiacus (strain ATCC 23779 / DSM 785 / 114-95).